The sequence spans 195 residues: Protein GrpE (195 aa).

The protein belongs to the GrpE family. In terms of assembly, homodimer.

It is found in the cytoplasm. Participates actively in the response to hyperosmotic and heat shock by preventing the aggregation of stress-denatured proteins, in association with DnaK and GrpE. It is the nucleotide exchange factor for DnaK and may function as a thermosensor. Unfolded proteins bind initially to DnaJ; upon interaction with the DnaJ-bound protein, DnaK hydrolyzes its bound ATP, resulting in the formation of a stable complex. GrpE releases ADP from DnaK; ATP binding to DnaK triggers the release of the substrate protein, thus completing the reaction cycle. Several rounds of ATP-dependent interactions between DnaJ, DnaK and GrpE are required for fully efficient folding. The protein is Protein GrpE of Francisella tularensis subsp. mediasiatica (strain FSC147).